The chain runs to 555 residues: Formate--tetrahydrofolate ligase (555 aa).

An ATP-binding site is contributed by 64–71 (TPAGEGKT).

It belongs to the formate--tetrahydrofolate ligase family.

It carries out the reaction (6S)-5,6,7,8-tetrahydrofolate + formate + ATP = (6R)-10-formyltetrahydrofolate + ADP + phosphate. The protein operates within one-carbon metabolism; tetrahydrofolate interconversion. This is Formate--tetrahydrofolate ligase from Allorhizobium ampelinum (strain ATCC BAA-846 / DSM 112012 / S4) (Agrobacterium vitis (strain S4)).